The following is a 569-amino-acid chain: Proton-coupled zinc antiporter SLC30A9, mitochondrial (569 aa).

The transit peptide at 1–68 (MLPGLAAAAA…IGTLSQVKLY (68 aa)) directs the protein to the mitochondrion. The next 5 membrane-spanning stretches (helical) occupy residues 240-260 (VVMV…LAWI), 315-335 (GVGI…MGLL), 343-363 (LLWA…TLLV), 393-413 (VILL…TCMG), and 425-445 (SLGS…LIYT). Residues 463–467 (LTELL) carry the LXXLL motif motif.

It belongs to the cation diffusion facilitator (CDF) transporter (TC 2.A.4) family. SLC30A subfamily. As to quaternary structure, interacts with GRIP1, ESR1, AR and CTNNB1.

It localises to the mitochondrion membrane. The protein localises to the nucleus. Its subcellular location is the endoplasmic reticulum. The enzyme catalyses Zn(2+)(in) + 2 H(+)(out) = Zn(2+)(out) + 2 H(+)(in). Mitochondrial proton-coupled zinc ion antiporter mediating the export of zinc from the mitochondria and involved in zinc homeostasis, zinc mobilization as well as mitochondrial morphology and health. In nucleus, functions as a secondary coactivator for nuclear receptors by cooperating with p160 coactivators subtypes. Plays a role in transcriptional activation of Wnt-responsive genes. This is Proton-coupled zinc antiporter SLC30A9, mitochondrial (SLC30A9) from Pongo abelii (Sumatran orangutan).